The primary structure comprises 699 residues: uncharacterized protein (699 aa).

Disordered regions lie at residues 175–208 (PTLG…ASLS), 289–364 (PTAK…EEPD), and 539–603 (RAKE…KEYL). Residues 183–194 (PSKHGDHSDSKT) show a composition bias toward basic and acidic residues. Positions 195–208 (YESPISNSQAASLS) are enriched in polar residues. The segment covering 308 to 322 (SKHKKRPKRLSKFKQ) has biased composition (basic residues). The span at 323–338 (AKLETKKSGNKDHATS) shows a compositional bias: basic and acidic residues. Polar residues-rich tracts occupy residues 339–360 (SEKL…SSSI) and 548–573 (HSNA…NTKL). Over residues 574–603 (NPKEEDKSTVESELKAPPKEKSSETSKEYL) the composition is skewed to basic and acidic residues.

It is found in the cytoplasm. This is an uncharacterized protein from Schizosaccharomyces pombe (strain 972 / ATCC 24843) (Fission yeast).